A 351-amino-acid chain; its full sequence is Minor outer capsid protein P9 (351 aa).

Disordered stretches follow at residues 245 to 281 and 288 to 307; these read GGVP…DQPE and KKVD…GNVS. Residues 288–297 are compositionally biased toward basic and acidic residues; the sequence is KKVDASKDAP.

Belongs to the phytoreovirus minor outer capsid protein P9 family.

It localises to the virion. It is found in the host cytoplasm. Its function is as follows. Minor outer capsid protein. The sequence is that of Minor outer capsid protein P9 from Rice dwarf virus (RDV).